The chain runs to 180 residues: CASP-like protein 5A1 (180 aa).

At 1-36 (MEVSHPAVHPVAVPPVLTEPPARVRMKDYQGMPGTL) the chain is on the cytoplasmic side. Residues 37–57 (GGLALRLGQLGFAVLSFSIMV) traverse the membrane as a helical segment. Topologically, residues 58 to 67 (STPDFSQVTA) are extracellular. A helical transmembrane segment spans residues 68-88 (FCYLVAATVLQTLWSSITAVV). Topologically, residues 89-102 (DIYALSVRRSLHHS) are cytoplasmic. A helical transmembrane segment spans residues 103 to 123 (LLVGLFAVGDGVTSTLTFAAA). The Extracellular portion of the chain corresponds to 124–150 (CATAGITVLIDNDLDECGQNHCGRFEA). The helical transmembrane segment at 151-171 (AAAMAFLSWIMAAPSFLLAFW) threads the bilayer. Over 172-180 (SFGNKIVCF) the chain is Cytoplasmic.

Belongs to the Casparian strip membrane proteins (CASP) family. Homodimer and heterodimers.

The protein localises to the cell membrane. The polypeptide is CASP-like protein 5A1 (Pteridium aquilinum subsp. aquilinum (Bracken fern)).